The sequence spans 333 residues: Transaldolase NQM1 (333 aa).

Lys-144 acts as the Schiff-base intermediate with substrate in catalysis.

The protein belongs to the transaldolase family. Type 1 subfamily. In terms of assembly, homodimer.

The catalysed reaction is D-sedoheptulose 7-phosphate + D-glyceraldehyde 3-phosphate = D-erythrose 4-phosphate + beta-D-fructose 6-phosphate. The protein operates within carbohydrate degradation; pentose phosphate pathway; D-glyceraldehyde 3-phosphate and beta-D-fructose 6-phosphate from D-ribose 5-phosphate and D-xylulose 5-phosphate (non-oxidative stage): step 2/3. In terms of biological role, transaldolase is important for the balance of metabolites in the pentose-phosphate pathway. The chain is Transaldolase NQM1 (NQM1) from Saccharomyces cerevisiae (strain ATCC 204508 / S288c) (Baker's yeast).